The sequence spans 206 residues: dCTP deaminase, dUMP-forming (206 aa).

Residues 117 to 122 (RSSFGR), D135, 143 to 145 (TLE), Q163, Y177, K184, and Q188 contribute to the dCTP site. Residue E145 is the Proton donor/acceptor of the active site.

It belongs to the dCTP deaminase family. In terms of assembly, homotrimer.

The catalysed reaction is dCTP + 2 H2O = dUMP + NH4(+) + diphosphate. Its pathway is pyrimidine metabolism; dUMP biosynthesis; dUMP from dCTP: step 1/1. Functionally, bifunctional enzyme that catalyzes both the deamination of dCTP to dUTP and the hydrolysis of dUTP to dUMP without releasing the toxic dUTP intermediate. The sequence is that of dCTP deaminase, dUMP-forming from Methanococcus maripaludis (strain DSM 14266 / JCM 13030 / NBRC 101832 / S2 / LL).